Reading from the N-terminus, the 329-residue chain is Vitamin B12 import system permease protein BtuC (329 aa).

A run of 9 helical transmembrane segments spans residues leucine 22–alanine 42, leucine 64–phenylalanine 84, proline 91–glycine 111, leucine 115–leucine 135, leucine 149–phenylalanine 169, glycine 187–isoleucine 207, glycine 243–isoleucine 263, alanine 277–alanine 297, and glutamate 305–leucine 325.

The protein belongs to the binding-protein-dependent transport system permease family. FecCD subfamily. The complex is composed of two ATP-binding proteins (BtuD), two transmembrane proteins (BtuC) and a solute-binding protein (BtuF).

Its subcellular location is the cell inner membrane. Part of the ABC transporter complex BtuCDF involved in vitamin B12 import. Involved in the translocation of the substrate across the membrane. The chain is Vitamin B12 import system permease protein BtuC from Citrobacter koseri (strain ATCC BAA-895 / CDC 4225-83 / SGSC4696).